The chain runs to 106 residues: MSTESALSYAALILADAEVEITSEKLLALVTKANVEVEGIWADLFAKALEGKDLKEFFFNFSAAPAAAAAGGAAGGGAAAEEAAEEEKEEEAKEESDDDMGFGLFD.

Residues 74 to 106 form a disordered region; it reads AGGGAAAEEAAEEEKEEEAKEESDDDMGFGLFD. Positions 82–100 are enriched in acidic residues; the sequence is EAAEEEKEEEAKEESDDDM.

It belongs to the eukaryotic ribosomal protein P1/P2 family. Component of the large ribosomal subunit (LSU). Mature ribosomes consist of a small (40S) and a large (60S) subunit. The 40S subunit contains about 32 different proteins and 1 molecule of RNA (18S). The 60S subunit contains 45 different proteins and 3 molecules of RNA (25S, 5.8S and 5S). The 5 acidic ribosomal P-proteins form the stalk structure of the 60S subunit. They are organized as a pentameric complex in which uL10/P0 interacts with 2 heterodimers, P1A-P2B and P1B-P2A. Post-translationally, phosphorylated.

Its subcellular location is the cytoplasm. Functionally, component of the ribosome, a large ribonucleoprotein complex responsible for the synthesis of proteins in the cell. The small ribosomal subunit (SSU) binds messenger RNAs (mRNAs) and translates the encoded message by selecting cognate aminoacyl-transfer RNA (tRNA) molecules. The large subunit (LSU) contains the ribosomal catalytic site termed the peptidyl transferase center (PTC), which catalyzes the formation of peptide bonds, thereby polymerizing the amino acids delivered by tRNAs into a polypeptide chain. The nascent polypeptides leave the ribosome through a tunnel in the LSU and interact with protein factors that function in enzymatic processing, targeting, and the membrane insertion of nascent chains at the exit of the ribosomal tunnel. The polypeptide is Large ribosomal subunit protein P1A (RPP1A) (Candida albicans (strain SC5314 / ATCC MYA-2876) (Yeast)).